The sequence spans 357 residues: Protein NDRG2 (357 aa).

The disordered stretch occupies residues M1–S28. Position 2 is an N-acetylalanine (A2). At T20 the chain carries Phosphothreonine. Residues S312 and S314 each carry the phosphoserine modification. Position 316 is a phosphothreonine (T316). At S318 the chain carries Phosphoserine. T320 carries the post-translational modification Phosphothreonine. The segment at T320–C357 is disordered. A phosphoserine mark is found at S321, S324, and S330. Over residues R333–G347 the composition is skewed to low complexity. Position 334 is a phosphothreonine (T334). S336, S338, S339, and S341 each carry phosphoserine. Phosphothreonine is present on T343. S356 is subject to Phosphoserine.

The protein belongs to the NDRG family. In terms of assembly, interacts with CTNNB1.

Its subcellular location is the cytoplasm. The protein localises to the perinuclear region. It localises to the cell projection. It is found in the growth cone. Its function is as follows. Contributes to the regulation of the Wnt signaling pathway. Down-regulates CTNNB1-mediated transcriptional activation of target genes, such as CCND1, and may thereby act as tumor suppressor. May be involved in dendritic cell and neuron differentiation. This chain is Protein NDRG2 (NDRG2), found in Pan troglodytes (Chimpanzee).